Here is a 535-residue protein sequence, read N- to C-terminus: Beta-glucosidase 47 (535 aa).

Positions 1 to 38 (MKKSIVYEIMETKSSMYLSQFRLWLCFIITTLVSLSSS) are cleaved as a signal peptide. Gln-73 serves as a coordination point for a beta-D-glucoside. Residue Asn-93 is glycosylated (N-linked (GlcNAc...) asparagine). A beta-D-glucoside contacts are provided by residues His-175 and 220 to 221 (NE). The active-site Proton donor is Glu-221. Cys-240 and Cys-247 are disulfide-bonded. N-linked (GlcNAc...) asparagine glycosylation is present at Asn-246. Residue Tyr-363 participates in a beta-D-glucoside binding. Cys-371 and Cys-376 are joined by a disulfide. N-linked (GlcNAc...) asparagine glycosylation occurs at Asn-419. Residue Glu-426 participates in a beta-D-glucoside binding. Glu-426 serves as the catalytic Nucleophile. Asn-432 carries N-linked (GlcNAc...) asparagine glycosylation. A beta-D-glucoside-binding positions include Trp-470, 477-478 (EW), and Phe-486.

It belongs to the glycosyl hydrolase 1 family.

The enzyme catalyses Hydrolysis of terminal, non-reducing beta-D-glucosyl residues with release of beta-D-glucose.. In Arabidopsis thaliana (Mouse-ear cress), this protein is Beta-glucosidase 47.